We begin with the raw amino-acid sequence, 722 residues long: Polyribonucleotide nucleotidyltransferase (722 aa).

2 residues coordinate Mg(2+): aspartate 495 and aspartate 501. One can recognise a KH domain in the interval 562–621; it reads PRLLSFRIDPELIGTVIGPGGRTIKGITERTNTKIDIEDGGIVTIASHDGVAAEEAQKII. Residues 631 to 699 form the S1 motif domain; that stretch reads GEVFTGSITR…NRGRINLTLR (69 aa).

Belongs to the polyribonucleotide nucleotidyltransferase family. Mg(2+) is required as a cofactor.

Its subcellular location is the cytoplasm. It catalyses the reaction RNA(n+1) + phosphate = RNA(n) + a ribonucleoside 5'-diphosphate. In terms of biological role, involved in mRNA degradation. Catalyzes the phosphorolysis of single-stranded polyribonucleotides processively in the 3'- to 5'-direction. In Prochlorococcus marinus (strain SARG / CCMP1375 / SS120), this protein is Polyribonucleotide nucleotidyltransferase.